The following is a 167-amino-acid chain: Ubiquitin-fold modifier-conjugating enzyme 1 (167 aa).

Cys116 (glycyl thioester intermediate) is an active-site residue. Lys122 is covalently cross-linked (Glycyl lysine isopeptide (Lys-Gly) (interchain with G-Cter in UFM1)).

It belongs to the ubiquitin-conjugating enzyme family. UFC1 subfamily. Interacts with UBA5 (via C-terminus). Interacts with UFL1. Interacts with UFM1. Interacts with KIRREL3. Post-translationally, ufmylated at Lys-122. Deufmylated by UFSP1.

In terms of biological role, E2-like enzyme which specifically catalyzes the second step in ufmylation. Accepts the ubiquitin-like modifier UFM1 from the E1 enzyme UBA5 and forms an intermediate with UFM1 via a thioester linkage. Ufmylation is involved in various processes, such as ribosome recycling, response to DNA damage, interferon response or reticulophagy (also called ER-phagy). The chain is Ubiquitin-fold modifier-conjugating enzyme 1 from Mus musculus (Mouse).